The chain runs to 282 residues: Bis(5'-nucleosyl)-tetraphosphatase, symmetrical (282 aa).

This sequence belongs to the Ap4A hydrolase family.

The catalysed reaction is P(1),P(4)-bis(5'-adenosyl) tetraphosphate + H2O = 2 ADP + 2 H(+). Hydrolyzes diadenosine 5',5'''-P1,P4-tetraphosphate to yield ADP. This chain is Bis(5'-nucleosyl)-tetraphosphatase, symmetrical, found in Citrobacter koseri (strain ATCC BAA-895 / CDC 4225-83 / SGSC4696).